Reading from the N-terminus, the 389-residue chain is Chalcone synthase 2 (389 aa).

Cys-164 is an active-site residue.

It belongs to the thiolase-like superfamily. Chalcone/stilbene synthases family.

It carries out the reaction (E)-4-coumaroyl-CoA + 3 malonyl-CoA + 3 H(+) = 2',4,4',6'-tetrahydroxychalcone + 3 CO2 + 4 CoA. The protein operates within secondary metabolite biosynthesis; flavonoid biosynthesis. Functionally, the primary product of this enzyme is 4,2',4',6'-tetrahydroxychalcone (also termed naringenin-chalcone or chalcone) which can under specific conditions spontaneously isomerize into naringenin. The sequence is that of Chalcone synthase 2 (CHS2) from Solanum lycopersicum (Tomato).